The chain runs to 289 residues: BTB/POZ domain-containing protein KCTD7 (289 aa).

Polar residues predominate over residues 1–10; that stretch reads MVVVTGQSKG. The tract at residues 1–35 is disordered; the sequence is MVVVTGQSKGSGDPDEAMSSSDAEDDFQEPATPTA. Positions 51–149 constitute a BTB domain; sequence EVVPLNVGGM…HLEDVQPLKG (99 aa).

The protein resides in the cell membrane. The protein localises to the cytoplasm. It localises to the cytosol. May be involved in the control of excitability of cortical neurons. This is BTB/POZ domain-containing protein KCTD7 (KCTD7) from Gallus gallus (Chicken).